The sequence spans 417 residues: Alpha-galactosidase (417 aa).

The first 55 residues, M1–A55, serve as a signal peptide directing secretion. W71, D106, D107, C156, K183, D185, W219, R236, and D240 together coordinate alpha-D-galactose. Cystine bridges form between C76-C108 and C156-C187. D185 serves as the catalytic Nucleophile. D240 acts as the Proton donor in catalysis.

The protein belongs to the glycosyl hydrolase 27 family.

The enzyme catalyses Hydrolysis of terminal, non-reducing alpha-D-galactose residues in alpha-D-galactosides, including galactose oligosaccharides, galactomannans and galactolipids.. The catalysed reaction is melibiose + H2O = D-galactose + D-glucose. It carries out the reaction raffinose + H2O = sucrose + D-galactose. It catalyses the reaction stachyose + H2O = raffinose + D-galactose. The enzyme catalyses alpha-D-Gal-(1-&gt;6)-beta-D-Man-(1-&gt;4)-beta-D-Man-(1-&gt;4)-D-Man + H2O = beta-D-Man-(1-&gt;4)-beta-D-Man-(1-&gt;4)-D-Man + D-galactose. The catalysed reaction is beta-D-Man-(1-&gt;4)-[alpha-D-Gal-(1-&gt;6)]-beta-D-Man-(1-&gt;4)-beta-D-Man-(1-&gt;4)-D-Man + H2O = beta-D-Man-(1-&gt;4)-beta-D-Man-(1-&gt;4)-beta-D-Man-(1-&gt;4)-D-Man + D-galactose. Its activity is regulated as follows. 1 mM Hg(2+) and Ag(2+) decrease activity by 98% and 96%, respectively. 1 mM Para-chloromercuribenzoic acid (PCMB) completely inhibits enzymatic activity. Functionally, hydrolyzes melibiose, raffinose and stachyose in the following decreasing order of reactivity: raffinose, melibiose, stachyose. Acts on both the terminal alpha-galactosyl residue and the side-chain alpha-galactosyl residue of the galactomanno-oligosaccharides. The sequence is that of Alpha-galactosidase from Oryza sativa subsp. japonica (Rice).